The sequence spans 358 residues: Porphobilinogen deaminase, chloroplastic (358 aa).

A signal peptide spans 1–24; that stretch reads MPPPPRCAATTAHHSLLGSPTCLA. Cys290 carries the S-(dipyrrolylmethanemethyl)cysteine modification.

It belongs to the HMBS family. Requires dipyrromethane as cofactor.

It is found in the plastid. The protein localises to the chloroplast. The enzyme catalyses 4 porphobilinogen + H2O = hydroxymethylbilane + 4 NH4(+). It functions in the pathway porphyrin-containing compound metabolism; protoporphyrin-IX biosynthesis; coproporphyrinogen-III from 5-aminolevulinate: step 2/4. It participates in porphyrin-containing compound metabolism; chlorophyll biosynthesis. Functionally, tetrapolymerization of the monopyrrole PBG into the hydroxymethylbilane pre-uroporphyrinogen in several discrete steps. The sequence is that of Porphobilinogen deaminase, chloroplastic (HEMC) from Oryza sativa subsp. japonica (Rice).